The primary structure comprises 298 residues: UDP-3-O-acyl-N-acetylglucosamine deacetylase (298 aa).

The Zn(2+) site is built by His79, His239, and Asp243. Catalysis depends on His266, which acts as the Proton donor.

This sequence belongs to the LpxC family. Requires Zn(2+) as cofactor.

The enzyme catalyses a UDP-3-O-[(3R)-3-hydroxyacyl]-N-acetyl-alpha-D-glucosamine + H2O = a UDP-3-O-[(3R)-3-hydroxyacyl]-alpha-D-glucosamine + acetate. The protein operates within glycolipid biosynthesis; lipid IV(A) biosynthesis; lipid IV(A) from (3R)-3-hydroxytetradecanoyl-[acyl-carrier-protein] and UDP-N-acetyl-alpha-D-glucosamine: step 2/6. Its function is as follows. Catalyzes the hydrolysis of UDP-3-O-myristoyl-N-acetylglucosamine to form UDP-3-O-myristoylglucosamine and acetate, the committed step in lipid A biosynthesis. The chain is UDP-3-O-acyl-N-acetylglucosamine deacetylase from Wigglesworthia glossinidia brevipalpis.